A 130-amino-acid chain; its full sequence is Small ribosomal subunit protein uS8x (130 aa).

Belongs to the universal ribosomal protein uS8 family.

The protein is Small ribosomal subunit protein uS8x (RPS15AD) of Arabidopsis thaliana (Mouse-ear cress).